A 492-amino-acid polypeptide reads, in one-letter code: Protein KOKOPELLI (492 aa).

Disordered regions lie at residues 218–354 and 394–426; these read VTSP…RNVM and SKFHHKHQEKSKERKRPMSESKGLTTHKQQHQG. A compositionally biased stretch (acidic residues) spans 256-270; that stretch reads QETETFDDDSSETEA. A compositionally biased stretch (low complexity) spans 287–305; it reads STSQEYSGETGSSSGSEWE. Residues 317–336 show a composition bias toward polar residues; it reads ESSYPPQNDDSVSEVSTSPP. Basic and acidic residues-rich tracts occupy residues 337 to 348 and 403 to 412; these read HTDRDTSREPGK and KSKERKRPMS.

In terms of tissue distribution, mostly expressed in pollen and open flowers and, to a lower extent, in closed flowers.

Its function is as follows. Positively regulates reproductive function by facilitating male gametophyte formation and double fertilization. This Arabidopsis thaliana (Mouse-ear cress) protein is Protein KOKOPELLI.